Reading from the N-terminus, the 181-residue chain is MNKTQQQLLINAIHTIPDYPVEGIMFRDVTSLLEDAEAFKLVMELLENKYKGRGFTKIVGTEARGFLFGAPLALALNIGFIPVRKPGKLPRPTYSQAYQLEYGEDILEIHQDALTPEDNVLIIDDLLATGGTIEATTKLIRRLGAQVQEAGFVISLPDLGGEERLAELNITPYSLIQYQGE.

It belongs to the purine/pyrimidine phosphoribosyltransferase family. In terms of assembly, homodimer.

It localises to the cytoplasm. It catalyses the reaction AMP + diphosphate = 5-phospho-alpha-D-ribose 1-diphosphate + adenine. The protein operates within purine metabolism; AMP biosynthesis via salvage pathway; AMP from adenine: step 1/1. In terms of biological role, catalyzes a salvage reaction resulting in the formation of AMP, that is energically less costly than de novo synthesis. This chain is Adenine phosphoribosyltransferase, found in Colwellia psychrerythraea (strain 34H / ATCC BAA-681) (Vibrio psychroerythus).